The chain runs to 149 residues: Transcriptional repressor NrdR (149 aa).

A zinc finger spans residues cysteine 3–cysteine 34. Residues proline 49–aspartate 139 enclose the ATP-cone domain.

Belongs to the NrdR family. Zn(2+) serves as cofactor.

In terms of biological role, negatively regulates transcription of bacterial ribonucleotide reductase nrd genes and operons by binding to NrdR-boxes. The sequence is that of Transcriptional repressor NrdR from Verminephrobacter eiseniae (strain EF01-2).